A 581-amino-acid polypeptide reads, in one-letter code: Arginine--tRNA ligase (581 aa).

The 'HIGH' region signature appears at 131 to 141; it reads ANPTGPLHVGH.

It belongs to the class-I aminoacyl-tRNA synthetase family. In terms of assembly, monomer.

It localises to the cytoplasm. It carries out the reaction tRNA(Arg) + L-arginine + ATP = L-arginyl-tRNA(Arg) + AMP + diphosphate. The polypeptide is Arginine--tRNA ligase (Ruegeria pomeroyi (strain ATCC 700808 / DSM 15171 / DSS-3) (Silicibacter pomeroyi)).